The sequence spans 65 residues: MPKIKTVRGAAKRFKKTGKGGFKHKHANLRHILTKKATKRKRHLRPKAMVSKGDLGLVIACLPYA.

The tract at residues 1–22 is disordered; the sequence is MPKIKTVRGAAKRFKKTGKGGF. Residues 10–22 show a composition bias toward basic residues; sequence AAKRFKKTGKGGF.

This sequence belongs to the bacterial ribosomal protein bL35 family.

The polypeptide is Large ribosomal subunit protein bL35 (Klebsiella pneumoniae (strain 342)).